Reading from the N-terminus, the 357-residue chain is Putative diaminopimelate epimerase, chloroplastic (357 aa).

A chloroplast-targeting transit peptide spans 1–47 (MSSATAAATATIAAAAAAAAKLAATPAPAPSRRRLTLRGNPTARRCV). Residues cysteine 145 and cysteine 300 contribute to the active site.

It belongs to the diaminopimelate epimerase family.

The protein resides in the plastid. Its subcellular location is the chloroplast. The catalysed reaction is (2S,6S)-2,6-diaminopimelate = meso-2,6-diaminopimelate. Its pathway is amino-acid biosynthesis; L-lysine biosynthesis via DAP pathway; DL-2,6-diaminopimelate from LL-2,6-diaminopimelate: step 1/1. This Oryza sativa subsp. indica (Rice) protein is Putative diaminopimelate epimerase, chloroplastic (DAPF).